A 456-amino-acid chain; its full sequence is Glutamate--tRNA ligase 2 (456 aa).

Positions 8 to 18 (PSPTGYIHIGN) match the 'HIGH' region motif. The 'KMSKS' region motif lies at 249–253 (GLSKR). Lys-252 contributes to the ATP binding site.

It belongs to the class-I aminoacyl-tRNA synthetase family. Glutamate--tRNA ligase type 1 subfamily. As to quaternary structure, monomer.

Its subcellular location is the cytoplasm. The enzyme catalyses tRNA(Glu) + L-glutamate + ATP = L-glutamyl-tRNA(Glu) + AMP + diphosphate. Functionally, catalyzes the attachment of glutamate to tRNA(Glu) in a two-step reaction: glutamate is first activated by ATP to form Glu-AMP and then transferred to the acceptor end of tRNA(Glu). The chain is Glutamate--tRNA ligase 2 from Bartonella bacilliformis (strain ATCC 35685 / KC583 / Herrer 020/F12,63).